Reading from the N-terminus, the 101-residue chain is NADH-quinone oxidoreductase subunit K (101 aa).

Helical transmembrane passes span 4 to 24, 30 to 50, and 61 to 81; these read LAHY…GIFL, IIIL…FVAF, and IFVF…LAIL.

This sequence belongs to the complex I subunit 4L family. NDH-1 is composed of 14 different subunits. Subunits NuoA, H, J, K, L, M, N constitute the membrane sector of the complex.

It is found in the cell inner membrane. The enzyme catalyses a quinone + NADH + 5 H(+)(in) = a quinol + NAD(+) + 4 H(+)(out). Its function is as follows. NDH-1 shuttles electrons from NADH, via FMN and iron-sulfur (Fe-S) centers, to quinones in the respiratory chain. The immediate electron acceptor for the enzyme in this species is believed to be ubiquinone. Couples the redox reaction to proton translocation (for every two electrons transferred, four hydrogen ions are translocated across the cytoplasmic membrane), and thus conserves the redox energy in a proton gradient. The chain is NADH-quinone oxidoreductase subunit K from Burkholderia cenocepacia (strain HI2424).